Consider the following 317-residue polypeptide: MSTQYLNSNLKVFSLNSNKELAEQIAKHIGVGLGKCSVDRFSDGEVQINIEESIRGCDVFIIQSTSFPVNEHIMELLIMIDALKRASAKTINIVIPYYGYARQDRKARSREPITSKLVANLLETAGATRVITLDLHAPQIQGFFDIPIDHLMGVPILSDYFETKGLKDIVIVSPDHGGVTRARKMADRLKAPIAIIDKRRPRPNVSEVMNIIGNIEGKTAILIDDIIDTAGTITLAANALVENGASEVYACCTHPVLSGPAIERIQNSNIKELVVTNSIVLPEEKKIDKVHELSVAPLIGEAIIRVYEEESVSVLFN.

ATP-binding positions include 43–45 (DGE) and 102–103 (RQ). Residues His136 and Asp175 each coordinate Mg(2+). Lys198 is an active-site residue. D-ribose 5-phosphate contacts are provided by residues Arg200, Asp224, and 228 to 232 (DTAGT).

Belongs to the ribose-phosphate pyrophosphokinase family. Class I subfamily. As to quaternary structure, homohexamer. The cofactor is Mg(2+).

The protein resides in the cytoplasm. The enzyme catalyses D-ribose 5-phosphate + ATP = 5-phospho-alpha-D-ribose 1-diphosphate + AMP + H(+). Its pathway is metabolic intermediate biosynthesis; 5-phospho-alpha-D-ribose 1-diphosphate biosynthesis; 5-phospho-alpha-D-ribose 1-diphosphate from D-ribose 5-phosphate (route I): step 1/1. Involved in the biosynthesis of the central metabolite phospho-alpha-D-ribosyl-1-pyrophosphate (PRPP) via the transfer of pyrophosphoryl group from ATP to 1-hydroxyl of ribose-5-phosphate (Rib-5-P). The protein is Ribose-phosphate pyrophosphokinase of Bacillus anthracis.